A 237-amino-acid polypeptide reads, in one-letter code: MKSLSFLNHEFEAFPSPELALTDPNGLLAIGGDLRPERLLSAYYNGIFPWFNSDDPILWWSPDPRAVFIPGEIHISTSLRKYLKKQPWRITINHAFTDVMAGCAQPREKQSGTWITQEIQMAYRELHYTGHAHSIEVWEGERLIGGLYGLAIGQVFCGESMFHRKTNASKAAVAALQQHLLKMGFKLIDAQVMNSHLESLGAKAIKRIDFITLLSELRNNPVDPATWTTKEVILELE.

This sequence belongs to the L/F-transferase family.

It is found in the cytoplasm. It carries out the reaction N-terminal L-lysyl-[protein] + L-leucyl-tRNA(Leu) = N-terminal L-leucyl-L-lysyl-[protein] + tRNA(Leu) + H(+). It catalyses the reaction N-terminal L-arginyl-[protein] + L-leucyl-tRNA(Leu) = N-terminal L-leucyl-L-arginyl-[protein] + tRNA(Leu) + H(+). The enzyme catalyses L-phenylalanyl-tRNA(Phe) + an N-terminal L-alpha-aminoacyl-[protein] = an N-terminal L-phenylalanyl-L-alpha-aminoacyl-[protein] + tRNA(Phe). Its function is as follows. Functions in the N-end rule pathway of protein degradation where it conjugates Leu, Phe and, less efficiently, Met from aminoacyl-tRNAs to the N-termini of proteins containing an N-terminal arginine or lysine. This Shewanella baltica (strain OS223) protein is Leucyl/phenylalanyl-tRNA--protein transferase.